The chain runs to 449 residues: Glucose-6-phosphate isomerase (449 aa).

Glutamate 291 serves as the catalytic Proton donor. Active-site residues include histidine 312 and lysine 426.

The protein belongs to the GPI family.

It localises to the cytoplasm. It carries out the reaction alpha-D-glucose 6-phosphate = beta-D-fructose 6-phosphate. It participates in carbohydrate biosynthesis; gluconeogenesis. Its pathway is carbohydrate degradation; glycolysis; D-glyceraldehyde 3-phosphate and glycerone phosphate from D-glucose: step 2/4. Its function is as follows. Catalyzes the reversible isomerization of glucose-6-phosphate to fructose-6-phosphate. The protein is Glucose-6-phosphate isomerase of Streptococcus pyogenes serotype M28 (strain MGAS6180).